Reading from the N-terminus, the 414-residue chain is Protein IQ-DOMAIN 8 (414 aa).

Residues 14 to 21 (NKKNITDD) carry the Nuclear localization signal 1 motif. The segment at 40–61 (LISSSKGFKSRGGSYGTPSLGS) is disordered. IQ domains follow at residues 92 to 120 (REWA…AVVR), 121 to 143 (IQAI…CMQA), and 144 to 169 (LVRV…EKPS). The calmodulin-binding stretch occupies residues 119 to 132 (VRIQAIFRGRQVRK). Disordered stretches follow at residues 156-190 (NRGP…SPGS), 218-244 (HQPR…SCKS), and 262-329 (GRLM…SGSF). The segment covering 164–184 (ELEKPSDQQKDDPAKQAEKGW) has biased composition (basic and acidic residues). Residues 231-244 (KQGSVKKNNGSCKS) are compositionally biased toward polar residues. The segment covering 274–289 (NARKSESSVSEHDTVQ) has biased composition (basic and acidic residues). Over residues 307–328 (SSSATSSESSSTSQSPVPFSGS) the composition is skewed to low complexity. The Nuclear localization signal 2 motif lies at 336–343 (YRKPSYMS). The interval 347–398 (SIKAKQRRSGSSSSCSKTPFEKKQSMSYNGDVNVRRSAGSDPLNNQWTDLYP) is disordered.

It belongs to the IQD family. In terms of assembly, binds to multiple calmodulin (CaM) in the presence of Ca(2+) and CaM-like proteins.

The protein localises to the nucleus. The protein resides in the cytoplasm. It is found in the cytoskeleton. It localises to the nucleus envelope. May be involved in cooperative interactions with calmodulins or calmodulin-like proteins. Recruits calmodulin proteins to microtubules, thus being a potential scaffold in cellular signaling and trafficking. May associate with nucleic acids and regulate gene expression at the transcriptional or post-transcriptional level. In Arabidopsis thaliana (Mouse-ear cress), this protein is Protein IQ-DOMAIN 8.